Here is a 375-residue protein sequence, read N- to C-terminus: Queuine tRNA-ribosyltransferase (375 aa).

The Proton acceptor role is filled by D89. Substrate-binding positions include 89-93 (DSGGF), D143, Q187, and G214. The interval 245 to 251 (GVGKPED) is RNA binding. D264 acts as the Nucleophile in catalysis. The tract at residues 269 to 273 (TRNAR) is RNA binding; important for wobble base 34 recognition. Positions 302, 304, 307, and 333 each coordinate Zn(2+).

Belongs to the queuine tRNA-ribosyltransferase family. As to quaternary structure, homodimer. Within each dimer, one monomer is responsible for RNA recognition and catalysis, while the other monomer binds to the replacement base PreQ1. The cofactor is Zn(2+).

The enzyme catalyses 7-aminomethyl-7-carbaguanine + guanosine(34) in tRNA = 7-aminomethyl-7-carbaguanosine(34) in tRNA + guanine. The protein operates within tRNA modification; tRNA-queuosine biosynthesis. Its function is as follows. Catalyzes the base-exchange of a guanine (G) residue with the queuine precursor 7-aminomethyl-7-deazaguanine (PreQ1) at position 34 (anticodon wobble position) in tRNAs with GU(N) anticodons (tRNA-Asp, -Asn, -His and -Tyr). Catalysis occurs through a double-displacement mechanism. The nucleophile active site attacks the C1' of nucleotide 34 to detach the guanine base from the RNA, forming a covalent enzyme-RNA intermediate. The proton acceptor active site deprotonates the incoming PreQ1, allowing a nucleophilic attack on the C1' of the ribose to form the product. After dissociation, two additional enzymatic reactions on the tRNA convert PreQ1 to queuine (Q), resulting in the hypermodified nucleoside queuosine (7-(((4,5-cis-dihydroxy-2-cyclopenten-1-yl)amino)methyl)-7-deazaguanosine). The chain is Queuine tRNA-ribosyltransferase from Aliivibrio fischeri (strain ATCC 700601 / ES114) (Vibrio fischeri).